Here is a 218-residue protein sequence, read N- to C-terminus: Pyridoxine/pyridoxamine 5'-phosphate oxidase (218 aa).

Residues 14–17 (RREY) and Lys-72 contribute to the substrate site. FMN is bound by residues 67-72 (RIVLLK), 82-83 (YT), Arg-88, Lys-89, and Gln-111. Residues Tyr-129, Arg-133, and Ser-137 each contribute to the substrate site. FMN contacts are provided by residues 146–147 (QS) and Trp-191. 197–199 (RLH) lines the substrate pocket. Arg-201 lines the FMN pocket.

Belongs to the pyridoxamine 5'-phosphate oxidase family. Homodimer. Requires FMN as cofactor.

It catalyses the reaction pyridoxamine 5'-phosphate + O2 + H2O = pyridoxal 5'-phosphate + H2O2 + NH4(+). The enzyme catalyses pyridoxine 5'-phosphate + O2 = pyridoxal 5'-phosphate + H2O2. The protein operates within cofactor metabolism; pyridoxal 5'-phosphate salvage; pyridoxal 5'-phosphate from pyridoxamine 5'-phosphate: step 1/1. Its pathway is cofactor metabolism; pyridoxal 5'-phosphate salvage; pyridoxal 5'-phosphate from pyridoxine 5'-phosphate: step 1/1. In terms of biological role, catalyzes the oxidation of either pyridoxine 5'-phosphate (PNP) or pyridoxamine 5'-phosphate (PMP) into pyridoxal 5'-phosphate (PLP). The protein is Pyridoxine/pyridoxamine 5'-phosphate oxidase of Klebsiella pneumoniae subsp. pneumoniae (strain ATCC 700721 / MGH 78578).